Reading from the N-terminus, the 362-residue chain is S-adenosylmethionine:tRNA ribosyltransferase-isomerase (362 aa).

It belongs to the QueA family. As to quaternary structure, monomer.

The protein resides in the cytoplasm. The catalysed reaction is 7-aminomethyl-7-carbaguanosine(34) in tRNA + S-adenosyl-L-methionine = epoxyqueuosine(34) in tRNA + adenine + L-methionine + 2 H(+). The protein operates within tRNA modification; tRNA-queuosine biosynthesis. Functionally, transfers and isomerizes the ribose moiety from AdoMet to the 7-aminomethyl group of 7-deazaguanine (preQ1-tRNA) to give epoxyqueuosine (oQ-tRNA). The protein is S-adenosylmethionine:tRNA ribosyltransferase-isomerase of Xanthobacter autotrophicus (strain ATCC BAA-1158 / Py2).